Here is a 506-residue protein sequence, read N- to C-terminus: Ecdysteroid UDP-glucosyltransferase (506 aa).

The first 18 residues, 1–18, serve as a signal peptide directing secretion; the sequence is MTAYLIVFCLCCWSAARS.

The protein belongs to the UDP-glycosyltransferase family.

Its function is as follows. Catalyzes the transfer of glucose from UDP-glucose to ecdysteroids which are insect molting hormones. Expression of egt interferes with normal insect development and block molting. The sequence is that of Ecdysteroid UDP-glucosyltransferase (EGT) from Lymantria dispar multicapsid nuclear polyhedrosis virus (LdMNPV).